A 411-amino-acid chain; its full sequence is MQTSEREGSGPELSPSVMPEAPLESPPFPTKSPAFDLFNLVLSYKRLEIYLEPLKDAGDGVRYLLRWQMPLCSLLTCLGLNVLFLTLNEGAWYSVGALMISVPALLGYLQEVCRARLPDSELMRRKYHSVRQEDLQRGRLSRPEAVAEVKSFLIQLEAFLSRLCCTCEAAYRVLHWENPVVSSQFYGALLGTVCMLYLLPLCWVLTLLNSTLFLGNVEFFRVVSEYRASLQQRMNPKQEEHAFESPPPPDVGGKDGLMDSTPALTPTEDLTPGSVEEAEEAEPDEEFKDAIEETHLVVLEDDEGAPCPAEDELALQDNGFLSKNEVLRSKVSRLTERLRKRYPTNNFGNCTGCSATFSVLKKRRSCSNCGNSFCSRCCSFKVPKSSMGATAPEAQRETVFVCASCNQTLSK.

A disordered region spans residues 1 to 27 (MQTSEREGSGPELSPSVMPEAPLESPP). Residues 1–66 (MQTSEREGSG…AGDGVRYLLR (66 aa)) are Cytoplasmic-facing. Residues 1-92 (MQTSEREGSG…LFLTLNEGAW (92 aa)) form a sufficient for homooligomerization region. The sufficient for localization to endoplasmic reticulum tubular network and for interactions with REEP1, REEP5, ATL1, ATL2, ATL3 and SPAST stretch occupies residues 1 to 205 (MQTSEREGSG…LYLLPLCWVL (205 aa)). The tract at residues 51–64 (LEPLKDAGDGVRYL) is necessary for interaction with RAB11A and function in neurite outgrowth. A helical transmembrane segment spans residues 67 to 87 (WQMPLCSLLTCLGLNVLFLTL). A topological domain (lumenal) is located at residue Asn-88. A helical transmembrane segment spans residues 89-109 (EGAWYSVGALMISVPALLGYL). Residues 110–187 (QEVCRARLPD…NPVVSSQFYG (78 aa)) lie on the Cytoplasmic side of the membrane. The helical intramembrane region spans 188-208 (ALLGTVCMLYLLPLCWVLTLL). Topologically, residues 209–411 (NSTLFLGNVE…CASCNQTLSK (203 aa)) are cytoplasmic. Positions 234-286 (MNPKQEEHAFESPPPPDVGGKDGLMDSTPALTPTEDLTPGSVEEAEEAEPDEE) are disordered. The interval 271–361 (TPGSVEEAEE…GCSATFSVLK (91 aa)) is necessary for interaction with KIF5A. The span at 276 to 286 (EEAEEAEPDEE) shows a compositional bias: acidic residues. The necessary for interaction with VAPA and function in cell projections formation stretch occupies residues 286–292 (EFKDAIE). Residues 344–410 (TNNFGNCTGC…VCASCNQTLS (67 aa)) form an FYVE-type zinc finger. 8 residues coordinate Zn(2+): Cys-350, Cys-353, Cys-366, Cys-369, Cys-374, Cys-377, Cys-402, and Cys-405.

In terms of assembly, can form homooligomers (monomers, dimers and tetramers). Interacts with RAB11A (GDP-bound form); regulates RAB11A. Interacts with FKBP8; may negatively regulate ZFYVE27 phosphorylation. Interacts with VAPA (via MSP domain); may regulate ZFYVE27 retention in the endoplasmic reticulum and its function in cell projections formation. Interacts with VAPB (via MSP domain). Interacts with REEP1, REEP5 and ATL1. Interacts with ATL2, ATL3 and SPAST. Interacts with KIF5A and RTN3. Interacts with RAB11B (GDP-bound form), SURF4, KIF5B and KIF5C. Post-translationally, phosphorylated. Phosphorylation is induced by NGF through the MAPK/ERK pathway and modulates interaction with RAB11A.

The protein resides in the recycling endosome membrane. Its subcellular location is the endoplasmic reticulum membrane. It localises to the cell projection. The protein localises to the growth cone membrane. Its function is as follows. Key regulator of RAB11-dependent vesicular trafficking during neurite extension through polarized membrane transport. Promotes axonal elongation and contributes to the establishment of neuronal cell polarity. Involved in nerve growth factor-induced neurite formation in VAPA-dependent manner. Contributes to both the formation and stabilization of the tubular ER network. Involved in ER morphogenesis by regulating the sheet-to-tubule balance and possibly the density of tubule interconnections. Acts as an adapter protein and facilitates the interaction of KIF5A with VAPA, VAPB, SURF4, RAB11A, RAB11B and RTN3 and the ZFYVE27-KIF5A complex contributes to the transport of these proteins in neurons. Can induce formation of neurite-like membrane protrusions in non-neuronal cells in a KIF5A/B-dependent manner. The polypeptide is Protrudin (ZFYVE27) (Homo sapiens (Human)).